A 61-amino-acid chain; its full sequence is U-stichotoxin-Hcr1a (61 aa).

Residues 1–21 form the signal peptide; the sequence is MKPAIFLMLFVAMFLISEGEG. The propeptide occupies 22 to 31; sequence FKPKDAPQER. Pro36 is modified (hydroxyproline). Cystine bridges form between Cys41–Cys53 and Cys44–Cys59.

It belongs to the Hau1a/HC18/HC19 family.

It is found in the secreted. Its subcellular location is the nematocyst. Toxin that is lethal to crab. Does not produce the typical symptoms associated with sodium channel toxins in crabs, suggesting that it likely does not act on sodium channels. This Radianthus crispa (Leathery sea anemone) protein is U-stichotoxin-Hcr1a.